We begin with the raw amino-acid sequence, 63 residues long: Large ribosomal subunit protein uL30 (63 aa).

Belongs to the universal ribosomal protein uL30 family. As to quaternary structure, part of the 50S ribosomal subunit.

The polypeptide is Large ribosomal subunit protein uL30 (Rickettsia prowazekii (strain Madrid E)).